The following is a 248-amino-acid chain: 14-3-3 protein homolog 2 (248 aa).

It belongs to the 14-3-3 family.

The protein is 14-3-3 protein homolog 2 of Echinococcus granulosus (Hydatid tapeworm).